A 432-amino-acid chain; its full sequence is MGKNVVVLGTQWGDEGKGKVVDLLTERAKYVVRYQGGHNAGHTLVINGEKTVLHLIPSGILRENVTSIIGNGVVLAPDALMKEMTDLEARGVPVRERLLLSEACPLILPYHVALDNAREKARGAKAIGTTGRGIGPAYEDKVARRGLRVGDLFNKETFAIKLKEIVDYHNFQLVHYYKEEAVDYQKVLDEVLAIADILTAMVVDVSELLDSARKRGDFMMFEGAQGTLLDIDHGTYPYVTSSNTTAGGVATGSGLGPRYVDYVLGIVKAYSTRVGAGPFPTELNDETGEFLRKQGNEYGATTGRSRRTGWLDIVAVRRAVQINSLSGFCMTKLDVLDGLKEVKLCVGYRMPDGREVDTTPLAAEGWEGIEPIYETMPGWSEVTFGVKEHSKLPQAALNYIKRVEELTGVPVDIISTGPDREETMILRDPFDA.

GTP contacts are provided by residues 13-19 (GDEGKGK) and 41-43 (GHT). Residue aspartate 14 is the Proton acceptor of the active site. Residues aspartate 14 and glycine 41 each contribute to the Mg(2+) site. IMP is bound by residues 14 to 17 (DEGK), 39 to 42 (NAGH), threonine 130, arginine 144, glutamine 225, threonine 240, and arginine 304. Histidine 42 functions as the Proton donor in the catalytic mechanism. 300-306 (ATTGRSR) lines the substrate pocket. GTP is bound by residues arginine 306, 332–334 (KLD), and 415–417 (STG).

It belongs to the adenylosuccinate synthetase family. In terms of assembly, homodimer. Mg(2+) is required as a cofactor.

The protein resides in the cytoplasm. The enzyme catalyses IMP + L-aspartate + GTP = N(6)-(1,2-dicarboxyethyl)-AMP + GDP + phosphate + 2 H(+). It functions in the pathway purine metabolism; AMP biosynthesis via de novo pathway; AMP from IMP: step 1/2. Functionally, plays an important role in the de novo pathway of purine nucleotide biosynthesis. Catalyzes the first committed step in the biosynthesis of AMP from IMP. This is Adenylosuccinate synthetase from Yersinia enterocolitica serotype O:8 / biotype 1B (strain NCTC 13174 / 8081).